A 195-amino-acid chain; its full sequence is MHFSSCVLVSALAIVTNVATASPPPLHQLSRPALKDSTIFRSTVHCADCPEGNCYKCTLGHNNTLIANTGGMAYLRALVGFQLPVPAKKVKQCTVQFPAFVKLMEAPINITVSEAKSNDWDEDTVTGENAPDSGEPFSTSHVPALTNPPALDATEACKNAAENGDFSIYVGAQFGRFEIWSKDSGNPAILHTYYK.

Residues 1–21 form the signal peptide; that stretch reads MHFSSCVLVSALAIVTNVATA. Residues Asn-62 and Asn-109 are each glycosylated (N-linked (GlcNAc...) asparagine). Positions 119–141 are disordered; sequence DWDEDTVTGENAPDSGEPFSTSH.

The protein localises to the secreted. This is an uncharacterized protein from Arthroderma benhamiae (strain ATCC MYA-4681 / CBS 112371) (Trichophyton mentagrophytes).